A 438-amino-acid chain; its full sequence is UDP-N-acetylmuramoylalanine--D-glutamate ligase (438 aa).

Position 112–118 (112–118 (GSNGKST)) interacts with ATP.

It belongs to the MurCDEF family.

Its subcellular location is the cytoplasm. The enzyme catalyses UDP-N-acetyl-alpha-D-muramoyl-L-alanine + D-glutamate + ATP = UDP-N-acetyl-alpha-D-muramoyl-L-alanyl-D-glutamate + ADP + phosphate + H(+). The protein operates within cell wall biogenesis; peptidoglycan biosynthesis. Its function is as follows. Cell wall formation. Catalyzes the addition of glutamate to the nucleotide precursor UDP-N-acetylmuramoyl-L-alanine (UMA). The sequence is that of UDP-N-acetylmuramoylalanine--D-glutamate ligase from Salmonella choleraesuis (strain SC-B67).